The chain runs to 958 residues: Translation initiation factor IF-2 (958 aa).

Disordered regions lie at residues 67-95 (APAA…APAP) and 111-355 (PAPA…VPRG). Positions 75–95 (APAPGPAAPKAPAPAPAAPAP) are enriched in pro residues. Over residues 140-161 (PAPARQGGQAPRPGGPRPGNNP) the composition is skewed to low complexity. Residues 195-206 (RGERRNDGERPG) are compositionally biased toward basic and acidic residues. A compositionally biased stretch (low complexity) spans 209–221 (RPAAGAGGPRPAA). Residues 228–241 (PGAPRPGAPRPGAP) are compositionally biased toward pro residues. Over residues 268–325 (GGAGRPGGAGRPGGGPGRPGGAPGAGTGGGAPAGGGFGKGGRGRGGTQGAFGKGGAGR) the composition is skewed to gly residues. Positions 326-335 (GKQRKSKRAK) are enriched in basic residues. In terms of domain architecture, tr-type G spans 450-621 (ARAPVVTVMG…AVLLTADAAL (172 aa)). The segment at 459–466 (GHVDHGKT) is G1. 459–466 (GHVDHGKT) lines the GTP pocket. The G2 stretch occupies residues 484 to 488 (GITQH). The segment at 509-512 (DTPG) is G3. GTP contacts are provided by residues 509–513 (DTPGH) and 563–566 (NKID). Positions 563 to 566 (NKID) are G4. A G5 region spans residues 599-601 (SAR).

Belongs to the TRAFAC class translation factor GTPase superfamily. Classic translation factor GTPase family. IF-2 subfamily.

The protein localises to the cytoplasm. One of the essential components for the initiation of protein synthesis. Protects formylmethionyl-tRNA from spontaneous hydrolysis and promotes its binding to the 30S ribosomal subunits. Also involved in the hydrolysis of GTP during the formation of the 70S ribosomal complex. The sequence is that of Translation initiation factor IF-2 from Paenarthrobacter aurescens (strain TC1).